The primary structure comprises 368 residues: Phospho-N-acetylmuramoyl-pentapeptide-transferase (368 aa).

9 consecutive transmembrane segments (helical) span residues 23–43 (YLTF…IFAG), 72–92 (VPTM…FLWA), 98–118 (HVWL…IDDY), 139–159 (VTLG…SVLL), 170–190 (LSVD…TAVS), 201–221 (GLAA…AYLC), 238–258 (AGEV…FLWF), 281–301 (VIAL…VFFV), and 345–365 (KIVI…LMTL).

Belongs to the glycosyltransferase 4 family. MraY subfamily. Mg(2+) serves as cofactor.

It localises to the cell inner membrane. The catalysed reaction is UDP-N-acetyl-alpha-D-muramoyl-L-alanyl-gamma-D-glutamyl-meso-2,6-diaminopimeloyl-D-alanyl-D-alanine + di-trans,octa-cis-undecaprenyl phosphate = di-trans,octa-cis-undecaprenyl diphospho-N-acetyl-alpha-D-muramoyl-L-alanyl-D-glutamyl-meso-2,6-diaminopimeloyl-D-alanyl-D-alanine + UMP. Its pathway is cell wall biogenesis; peptidoglycan biosynthesis. Its function is as follows. Catalyzes the initial step of the lipid cycle reactions in the biosynthesis of the cell wall peptidoglycan: transfers peptidoglycan precursor phospho-MurNAc-pentapeptide from UDP-MurNAc-pentapeptide onto the lipid carrier undecaprenyl phosphate, yielding undecaprenyl-pyrophosphoryl-MurNAc-pentapeptide, known as lipid I. This Chlorobaculum tepidum (strain ATCC 49652 / DSM 12025 / NBRC 103806 / TLS) (Chlorobium tepidum) protein is Phospho-N-acetylmuramoyl-pentapeptide-transferase.